A 105-amino-acid polypeptide reads, in one-letter code: Nitrogenase-stabilizing/protective protein NifW 1 (105 aa).

The protein belongs to the NifW family. In terms of assembly, homotrimer; associates with NifD.

Functionally, may protect the nitrogenase Fe-Mo protein from oxidative damage. The polypeptide is Nitrogenase-stabilizing/protective protein NifW 1 (Trichormus variabilis (strain ATCC 29413 / PCC 7937) (Anabaena variabilis)).